The sequence spans 88 residues: UPF0250 protein Sama_2593 (88 aa).

It belongs to the UPF0250 family.

The chain is UPF0250 protein Sama_2593 from Shewanella amazonensis (strain ATCC BAA-1098 / SB2B).